The chain runs to 385 residues: Zinc finger protein B385R (385 aa).

A C2H2-type zinc finger spans residues 166 to 190; sequence LQCPNCGCIQELMGTIFDETHFYNH.

Belongs to the asfivirus B385R family.

The polypeptide is Zinc finger protein B385R (Ornithodoros (relapsing fever ticks)).